Here is a 196-residue protein sequence, read N- to C-terminus: MSDSLNAAALDQLFRTARTQNAFADTPVSHEVLRELYELVKWGPTAANSGPARFVFVTSAEGKAKLKPALSEGNAAKTLAAPVTVIVAHDEDFHEKLPYLFPHADAKSWFDGPREGRTESAFRNGSLQGAYLILAARALGLDAGPMSGFDNAKVDAAFFAGTPIKSNFLVNLGYGDPAGLFPRSPRLSFDEAARFE.

Belongs to the nitroreductase family. HadB/RutE subfamily. The cofactor is FMN.

The protein is Putative NADH dehydrogenase/NAD(P)H nitroreductase XCV0587 of Xanthomonas euvesicatoria pv. vesicatoria (strain 85-10) (Xanthomonas campestris pv. vesicatoria).